A 317-amino-acid chain; its full sequence is Transaldolase (317 aa).

Residue Lys-131 is the Schiff-base intermediate with substrate of the active site.

It belongs to the transaldolase family. Type 1 subfamily. Homodimer.

The protein localises to the cytoplasm. The enzyme catalyses D-sedoheptulose 7-phosphate + D-glyceraldehyde 3-phosphate = D-erythrose 4-phosphate + beta-D-fructose 6-phosphate. Its pathway is carbohydrate degradation; pentose phosphate pathway; D-glyceraldehyde 3-phosphate and beta-D-fructose 6-phosphate from D-ribose 5-phosphate and D-xylulose 5-phosphate (non-oxidative stage): step 2/3. Transaldolase is important for the balance of metabolites in the pentose-phosphate pathway. The sequence is that of Transaldolase from Baumannia cicadellinicola subsp. Homalodisca coagulata.